Reading from the N-terminus, the 466-residue chain is Adenosylhomocysteinase (466 aa).

Residues Thr-57, Asp-132, and Glu-192 each contribute to the substrate site. 193-195 (TTT) serves as a coordination point for NAD(+). Positions 222 and 226 each coordinate substrate. NAD(+) contacts are provided by residues Asn-227, 256-261 (GYGDVG), Glu-279, Asn-314, 335-337 (IGH), and Asn-380.

The protein belongs to the adenosylhomocysteinase family. It depends on NAD(+) as a cofactor.

Its subcellular location is the cytoplasm. It carries out the reaction S-adenosyl-L-homocysteine + H2O = L-homocysteine + adenosine. The protein operates within amino-acid biosynthesis; L-homocysteine biosynthesis; L-homocysteine from S-adenosyl-L-homocysteine: step 1/1. Its function is as follows. May play a key role in the regulation of the intracellular concentration of adenosylhomocysteine. The polypeptide is Adenosylhomocysteinase (Rhizobium leguminosarum bv. trifolii (strain WSM2304)).